A 152-amino-acid polypeptide reads, in one-letter code: 2-C-methyl-D-erythritol 2,4-cyclodiphosphate synthase (152 aa).

A divalent metal cation is bound by residues aspartate 8 and histidine 10. 4-CDP-2-C-methyl-D-erythritol 2-phosphate contacts are provided by residues 8 to 10 (DSH) and 34 to 35 (HS). Histidine 42 contributes to the a divalent metal cation binding site. 4-CDP-2-C-methyl-D-erythritol 2-phosphate is bound by residues 56 to 58 (DIG) and 61 to 65 (FPDTD).

It belongs to the IspF family. In terms of assembly, homotrimer. A divalent metal cation serves as cofactor.

The enzyme catalyses 4-CDP-2-C-methyl-D-erythritol 2-phosphate = 2-C-methyl-D-erythritol 2,4-cyclic diphosphate + CMP. Its pathway is isoprenoid biosynthesis; isopentenyl diphosphate biosynthesis via DXP pathway; isopentenyl diphosphate from 1-deoxy-D-xylulose 5-phosphate: step 4/6. Its function is as follows. Involved in the biosynthesis of isopentenyl diphosphate (IPP) and dimethylallyl diphosphate (DMAPP), two major building blocks of isoprenoid compounds. Catalyzes the conversion of 4-diphosphocytidyl-2-C-methyl-D-erythritol 2-phosphate (CDP-ME2P) to 2-C-methyl-D-erythritol 2,4-cyclodiphosphate (ME-CPP) with a corresponding release of cytidine 5-monophosphate (CMP). This is 2-C-methyl-D-erythritol 2,4-cyclodiphosphate synthase from Thermus thermophilus (strain ATCC BAA-163 / DSM 7039 / HB27).